A 650-amino-acid polypeptide reads, in one-letter code: ATP-dependent DNA helicase PIF1 (650 aa).

The segment at 14 to 192 is PINT; that stretch reads MPSSTEAATD…ALEKRPMESQ (179 aa). A phosphoserine mark is found at Ser40 and Ser164. Residues 171–199 form a disordered region; it reads LQRAAATKAPDSALEKRPMESQTSTEAPR. 237 to 244 contributes to the ATP binding site; sequence GSAGTGKS. Residues 586 to 605 mediate DNA binding; sequence QAYVALSRARSLQGLRVLDF. The interval 631-650 is disordered; it reads LESQDDEEANSDLENMDPNL. The span at 633–650 shows a compositional bias: acidic residues; the sequence is SQDDEEANSDLENMDPNL.

It belongs to the helicase family. PIF1 subfamily. Monomer. Interacts with telomerase. Mg(2+) is required as a cofactor.

The protein localises to the nucleus. Its subcellular location is the mitochondrion. It catalyses the reaction Couples ATP hydrolysis with the unwinding of duplex DNA at the replication fork by translocating in the 5'-3' direction. This creates two antiparallel DNA single strands (ssDNA). The leading ssDNA polymer is the template for DNA polymerase III holoenzyme which synthesizes a continuous strand.. It carries out the reaction ATP + H2O = ADP + phosphate + H(+). In terms of biological role, DNA-dependent ATPase and 5'-3' DNA helicase required for the maintenance of both mitochondrial and nuclear genome stability. Efficiently unwinds G-quadruplex (G4) DNA structures and forked RNA-DNA hybrids. Resolves G4 structures, preventing replication pausing and double-strand breaks (DSBs) at G4 motifs. Involved in the maintenance of telomeric DNA. Inhibits telomere elongation, de novo telomere formation and telomere addition to DSBs via catalytic inhibition of telomerase. Reduces the processivity of telomerase by displacing active telomerase from DNA ends. Releases telomerase by unwinding the short telomerase RNA/telomeric DNA hybrid that is the intermediate in the telomerase reaction. Possesses an intrinsic strand annealing activity. In Mus musculus (Mouse), this protein is ATP-dependent DNA helicase PIF1.